The following is a 549-amino-acid chain: MAQLTEHPAHSALVAHHERVRDLHMRDLFAADSGRFDKLSLRLGDILFDYSKNRVTDETLGLLFDLARQAGVEARRDAMFAGEKINRTENRAVLHVALRNRANRPILVDGHDVMPDVNKVLNQMRIFCGRVHSGQWKGYSGKAITDVVNIGIGGSDLGPQMASLALAQYAVPGITSHFVSNVDGAHMVETLQRVSPETTLFIIASKTFTTLETMANAHDARDWFLAQAGDEAAVAKHFVALSTNAEAVAAFGIDTANMFAFWDWVGGRYSLWSAIGLSIALAVGFDNFEAMLEGAFLADEHFRSAPLERNIPVVMGLLGIWYNNYFGAQTQAILPYDQHLTRFAAYFQQGDMESNGKSVTNDGRFVDYTTGPIIWGEPGTNGQHAFYQLIHQGRKLIPCDFLAAAITRTPLGRHQDMLLSNFFAQTEALMKGKTVDEARAELADKVLGEAQLELLSKAKSFTGNRPTNSFLYRVLDPKTLGTLIALYEHKIFVQGTIWDINSYDQMGVELGKVLAGTILKELENDAPVASHDCSTNGLVNYYKELRLGD.

Catalysis depends on glutamate 353, which acts as the Proton donor. Residues histidine 384 and lysine 512 contribute to the active site.

The protein belongs to the GPI family.

The protein resides in the cytoplasm. It catalyses the reaction alpha-D-glucose 6-phosphate = beta-D-fructose 6-phosphate. It participates in carbohydrate biosynthesis; gluconeogenesis. The protein operates within carbohydrate degradation; glycolysis; D-glyceraldehyde 3-phosphate and glycerone phosphate from D-glucose: step 2/4. Catalyzes the reversible isomerization of glucose-6-phosphate to fructose-6-phosphate. In Solidesulfovibrio magneticus (strain ATCC 700980 / DSM 13731 / RS-1) (Desulfovibrio magneticus), this protein is Glucose-6-phosphate isomerase.